Consider the following 513-residue polypeptide: ATP synthase subunit alpha 1 (513 aa).

169 to 176 is a binding site for ATP; that stretch reads GDRQTGKT.

This sequence belongs to the ATPase alpha/beta chains family. F-type ATPases have 2 components, CF(1) - the catalytic core - and CF(0) - the membrane proton channel. CF(1) has five subunits: alpha(3), beta(3), gamma(1), delta(1), epsilon(1). CF(0) has three main subunits: a(1), b(2) and c(9-12). The alpha and beta chains form an alternating ring which encloses part of the gamma chain. CF(1) is attached to CF(0) by a central stalk formed by the gamma and epsilon chains, while a peripheral stalk is formed by the delta and b chains.

The protein resides in the cell inner membrane. It carries out the reaction ATP + H2O + 4 H(+)(in) = ADP + phosphate + 5 H(+)(out). Its function is as follows. Produces ATP from ADP in the presence of a proton gradient across the membrane. The alpha chain is a regulatory subunit. In Vibrio campbellii (strain ATCC BAA-1116), this protein is ATP synthase subunit alpha 1.